Consider the following 151-residue polypeptide: Ribosome maturation factor RimP (151 aa).

The protein belongs to the RimP family.

The protein localises to the cytoplasm. In terms of biological role, required for maturation of 30S ribosomal subunits. This is Ribosome maturation factor RimP from Thermoanaerobacter sp. (strain X514).